Here is a 272-residue protein sequence, read N- to C-terminus: 3-methyl-2-oxobutanoate hydroxymethyltransferase (272 aa).

The Mg(2+) site is built by Asp-52 and Asp-91. 3-methyl-2-oxobutanoate contacts are provided by residues 52 to 53 (DS), Asp-91, and Lys-121. Residue Glu-123 coordinates Mg(2+). Glu-190 serves as the catalytic Proton acceptor.

This sequence belongs to the PanB family. As to quaternary structure, homodecamer; pentamer of dimers. Mg(2+) is required as a cofactor.

The protein resides in the cytoplasm. It catalyses the reaction 3-methyl-2-oxobutanoate + (6R)-5,10-methylene-5,6,7,8-tetrahydrofolate + H2O = 2-dehydropantoate + (6S)-5,6,7,8-tetrahydrofolate. Its pathway is cofactor biosynthesis; (R)-pantothenate biosynthesis; (R)-pantoate from 3-methyl-2-oxobutanoate: step 1/2. In terms of biological role, catalyzes the reversible reaction in which hydroxymethyl group from 5,10-methylenetetrahydrofolate is transferred onto alpha-ketoisovalerate to form ketopantoate. This Flavobacterium johnsoniae (strain ATCC 17061 / DSM 2064 / JCM 8514 / BCRC 14874 / CCUG 350202 / NBRC 14942 / NCIMB 11054 / UW101) (Cytophaga johnsonae) protein is 3-methyl-2-oxobutanoate hydroxymethyltransferase.